A 115-amino-acid chain; its full sequence is Holo-[acyl-carrier-protein] synthase (115 aa).

Mg(2+)-binding residues include aspartate 8 and glutamate 50.

Belongs to the P-Pant transferase superfamily. AcpS family. It depends on Mg(2+) as a cofactor.

It is found in the cytoplasm. It catalyses the reaction apo-[ACP] + CoA = holo-[ACP] + adenosine 3',5'-bisphosphate + H(+). In terms of biological role, transfers the 4'-phosphopantetheine moiety from coenzyme A to a Ser of acyl-carrier-protein. The chain is Holo-[acyl-carrier-protein] synthase from Renibacterium salmoninarum (strain ATCC 33209 / DSM 20767 / JCM 11484 / NBRC 15589 / NCIMB 2235).